We begin with the raw amino-acid sequence, 272 residues long: MWSDILGLALFVSLNPLLLGFILLVLSRPRPVPNLVVFWVGCLIVNVPGFLIPLFVLRAVPSFAEFAEDLTTADPSSGIEPFQLGTGIFALAVSAVIALRMWVKRRANQPVLVGSGAGDRGPTDDASTLVLDSGAREAREPGAIARMILRMRSALQRLVSRLHQEWENGALWVALVFGLAYIPPPPLVLLVDTIIGGSGAPIGTQIIAVFVFIMAMLAVFEITLLSYVIAPRRTQAVLEPLHEWSHRHRQMILLVLFGAVGIWELIVGLGVI.

The next 6 membrane-spanning stretches (helical) occupy residues 5 to 25, 36 to 56, 79 to 99, 171 to 191, 206 to 226, and 252 to 272; these read ILGL…ILLV, VVFW…PLFV, IEPF…VIAL, LWVA…VLLV, IIAV…TLLS, and ILLV…LGVI.

It belongs to the peptidoglycolipid addressing protein (GAP) (TC 2.A.116) family.

The protein localises to the cell inner membrane. Required for the transport of peptidoglycolipids (GPLs) to the cell surface. The protein is Peptidoglycolipid exporter Gap of Mycolicibacterium smegmatis (strain ATCC 700084 / mc(2)155) (Mycobacterium smegmatis).